The chain runs to 628 residues: Basal cell adhesion molecule (628 aa).

Positions 1–31 (MEPPDARAGARRAPRLLVLALLLAAPPGSKA) are cleaved as a signal peptide. Ig-like V-type domains follow at residues 32–142 (EVRL…ARLK) and 150–253 (PEVS…RLDG). Over 32 to 547 (EVRLSVPPLV…GTVAPQTSQA (516 aa)) the chain is Extracellular. Intrachain disulfides connect Cys53-Cys125, Cys172-Cys237, and Cys291-Cys337. 3 consecutive Ig-like C2-type domains span residues 254–355 (PSFS…KTLE), 355–441 (ELRV…RSFR), and 448–538 (PELK…FHFG). N-linked (GlcNAc...) asparagine glycans are attached at residues Asn321, Asn330, and Asn378. 2 cysteine pairs are disulfide-bonded: Cys384-Cys424 and Cys473-Cys522. The helical transmembrane segment at 548–568 (GVAVMAVAISVALLLLVVAVF) threads the bilayer. The Cytoplasmic portion of the chain corresponds to 569–628 (YCMRRKGRPGCCQWGEKGSPPPGEPKLSHSGSQRPEQTGLLMGSASGGAKHGSGGFGDEC). The tract at residues 580 to 628 (CQWGEKGSPPPGEPKLSHSGSQRPEQTGLLMGSASGGAKHGSGGFGDEC) is disordered. Ser596, Ser598, Ser600, and Ser621 each carry phosphoserine. Positions 613 to 628 (ASGGAKHGSGGFGDEC) are enriched in gly residues.

As to quaternary structure, homodimer. Interacts with ITGA4:ITGB1. Interacts with spectrins SPTA1 and SPTB1. Epinephrine-stimulated phosphorylation of Ser-621 by PKA enhances adhesion to laminin. Ser-621 can also be phosphorylated by AKT1.

Its subcellular location is the cell membrane. Its function is as follows. Transmembrane glycoprotein that functions as both a receptor and an adhesion molecule playing a crucial role in cell adhesion, motility, migration and invasion. Extracellular domain enables binding to extracellular matrix proteins, such as laminin, integrin and other ligands while its intracellular domain interacts with cytoskeletal proteins like hemoglobin, facilitating cell signal transduction. Serves as a receptor for laminin alpha-5/LAMA5 to promote cell adhesion. Mechanistically, JAK2 induces BCAM phosphorylation and activates its adhesion to laminin by stimulating a Rap1/AKT signaling pathway in the absence of EPOR. The polypeptide is Basal cell adhesion molecule (BCAM) (Bos taurus (Bovine)).